Reading from the N-terminus, the 538-residue chain is Phosphatidylethanolamine transferase Mcr-2 (538 aa).

Transmembrane regions (helical) follow at residues 14-34 (PFVL…LTFF), 47-67 (LGFI…IVVL), 72-92 (YVLK…SYFT), 121-141 (LAFF…VAVA), and 161-181 (VSLV…ASFF). Zn(2+) is bound by residues Glu-244 and Thr-283. 3 disulfides stabilise this stretch: Cys-279/Cys-289, Cys-354/Cys-362, and Cys-412/Cys-420. Thr-283 is modified (phosphothreonine). Zn(2+)-binding residues include Asp-463 and His-464.

Belongs to the phosphoethanolamine transferase family. In terms of assembly, monomer. Phosphorylated at Thr-283; may represent an intermediate in the catalytic mechanism.

The protein resides in the cell inner membrane. The catalysed reaction is lipid A (E. coli) + a 1,2-diacyl-sn-glycero-3-phosphoethanolamine + H(+) = lipid A 4'-(2-aminoethyl diphosphate) (E. coli) + a 1,2-diacyl-sn-glycerol. In terms of biological role, probably catalyzes the addition of a phosphoethanolamine moiety to lipid A. Phosphoethanolamine modification of lipid A confers polymyxin resistance. Confers resistance to polymyxin-type antibiotics such as colistin. In Escherichia coli, this protein is Phosphatidylethanolamine transferase Mcr-2.